The primary structure comprises 340 residues: Outer membrane protein B (340 aa).

Positions 1-26 are cleaved as a signal peptide; it reads MSSKLVNYLRLTFLSFLGIASTSLDA.

This sequence belongs to the chlamydial OMP family.

The protein resides in the cell outer membrane. The polypeptide is Outer membrane protein B (ompB) (Chlamydia trachomatis serovar D (strain ATCC VR-885 / DSM 19411 / UW-3/Cx)).